Reading from the N-terminus, the 634-residue chain is MVNDKILYDSCKTFNIDASSAQSLIESGANPLYEYDGETPLKAYVTKKNNNIKNDVVILLLSSVDYKNINDFDIFEYLCSDNIDIDLLKLLISKGIEINSIKNGINIVEKYATTSNPNVDVFKLLLDKGIPTCSNIQYGYKIKIEQIRRAGEYYNWDDELDDYDYDYTTDYDDRMGKTVLYYYIITRSQDGYATSLDVINYLISHKKEMRYYTYREHTTLYYYLDKCDIKREIFDALFDSNYSGHELMNILSNYLRKQFRKKNHKIDNYIVDQLLFDRDTFYILELCNSLRNNILISTILKRYTDSIQDLLLEYVSYHTVYINVIKCMIDEGATLYRFKHINKYFQKFGNRDPKVVEYILKNGNLVVDNDNDDNLINIMPLFPTFSMRELDVLSILKLCKPYIDDINKIDKHGCSILYHCIKSHSVSLVEWLIDNGADINIITKYGFTCITICVILADKYIPEIAELYIKILEIILSKLPTIECIKKTVDYLDDHRYLFIGGNNKSLLKICIKYFILVDYKYTCSMYPSYIEFITDCEKEIADMRQIKINGTDMLTVMYMLNKPTKKRYVNNPIFTDWANKQYKFYNQIIYNANKLIEQSKKIDDMIEEVSIDDNRLSTLPLEIRHLIFSYAFL.

ANK repeat units follow at residues 36–69, 70–100, 103–134, 175–211, 307–337, and 412–441; these read DGET…YKNI, NDFD…EINS, NGIN…PTCS, MGKT…EMRY, IQDL…TLYR, and HGCS…DINI.

This sequence belongs to the orthopoxvirus OPG025 family. Interacts with components of host SCF complex CUL1 and SKP1 and components of the cullin deneddylation/COP9 signalosome complex subunits COPS7A and COPS7B.

In terms of biological role, plays a role in the inhibition of host immune repsonse by counteracting the action of interferons on early events in the viral replication cycle. This is Ankyrin repeat protein OPG025 (OPG035) from Vaccinia virus (strain Western Reserve) (VACV).